Reading from the N-terminus, the 100-residue chain is Urease subunit gamma (100 aa).

Belongs to the urease gamma subunit family. In terms of assembly, heterotrimer of UreA (gamma), UreB (beta) and UreC (alpha) subunits. Three heterotrimers associate to form the active enzyme.

The protein resides in the cytoplasm. The enzyme catalyses urea + 2 H2O + H(+) = hydrogencarbonate + 2 NH4(+). It participates in nitrogen metabolism; urea degradation; CO(2) and NH(3) from urea (urease route): step 1/1. This Burkholderia orbicola (strain MC0-3) protein is Urease subunit gamma.